Consider the following 435-residue polypeptide: 3-phosphoshikimate 1-carboxyvinyltransferase (435 aa).

Positions 15, 16, and 20 each coordinate 3-phosphoshikimate. Residue Lys-15 participates in phosphoenolpyruvate binding. 2 residues coordinate phosphoenolpyruvate: Gly-96 and Arg-124. Residues Ser-169, Gln-171, Thr-195, Asp-319, and Lys-346 each contribute to the 3-phosphoshikimate site. Gln-171 lines the phosphoenolpyruvate pocket. The active-site Proton acceptor is Asp-319. Phosphoenolpyruvate-binding residues include Arg-350 and Arg-394.

This sequence belongs to the EPSP synthase family. As to quaternary structure, monomer.

Its subcellular location is the cytoplasm. The enzyme catalyses 3-phosphoshikimate + phosphoenolpyruvate = 5-O-(1-carboxyvinyl)-3-phosphoshikimate + phosphate. It functions in the pathway metabolic intermediate biosynthesis; chorismate biosynthesis; chorismate from D-erythrose 4-phosphate and phosphoenolpyruvate: step 6/7. Functionally, catalyzes the transfer of the enolpyruvyl moiety of phosphoenolpyruvate (PEP) to the 5-hydroxyl of shikimate-3-phosphate (S3P) to produce enolpyruvyl shikimate-3-phosphate and inorganic phosphate. In Chloroherpeton thalassium (strain ATCC 35110 / GB-78), this protein is 3-phosphoshikimate 1-carboxyvinyltransferase.